The primary structure comprises 284 residues: Tryptophan 2,3-dioxygenase (284 aa).

Residues 51 to 55 (FIIQH), Tyr-113, and Arg-117 contribute to the substrate site. Residue His-240 coordinates heme. Thr-254 is a substrate binding site.

The protein belongs to the tryptophan 2,3-dioxygenase family. In terms of assembly, homotetramer. Requires heme as cofactor.

It carries out the reaction L-tryptophan + O2 = N-formyl-L-kynurenine. It participates in amino-acid degradation; L-tryptophan degradation via kynurenine pathway; L-kynurenine from L-tryptophan: step 1/2. Its function is as follows. Heme-dependent dioxygenase that catalyzes the oxidative cleavage of the L-tryptophan (L-Trp) pyrrole ring and converts L-tryptophan to N-formyl-L-kynurenine. Catalyzes the oxidative cleavage of the indole moiety. The sequence is that of Tryptophan 2,3-dioxygenase from Rhodococcus jostii (strain RHA1).